The primary structure comprises 151 residues: Ubiquitin-conjugating enzyme E2 N (151 aa).

One can recognise a UBC core domain in the interval 3–149; it reads SLPRRIIKET…AREWTQKYAV (147 aa). Residue Cys87 is the Glycyl thioester intermediate of the active site.

The protein belongs to the ubiquitin-conjugating enzyme family.

It carries out the reaction S-ubiquitinyl-[E1 ubiquitin-activating enzyme]-L-cysteine + [E2 ubiquitin-conjugating enzyme]-L-cysteine = [E1 ubiquitin-activating enzyme]-L-cysteine + S-ubiquitinyl-[E2 ubiquitin-conjugating enzyme]-L-cysteine.. The protein operates within protein modification; protein ubiquitination. In terms of biological role, catalyzes the covalent attachment of ubiquitin to other proteins. This is Ubiquitin-conjugating enzyme E2 N (ben) from Drosophila melanogaster (Fruit fly).